Reading from the N-terminus, the 192-residue chain is Ras-like GTP-binding protein O-RHO (192 aa).

12 to 19 (GDGACGKT) is a GTP binding site. The short motif at 34-42 (YVPTVFENY) is the Effector region element. GTP-binding positions include 59 to 63 (DTAGQ) and 117 to 120 (NKKT). A Cysteine methyl ester modification is found at Cys-189. Cys-189 carries S-geranylgeranyl cysteine lipidation. The propeptide at 190–192 (LLL) is removed in mature form.

Belongs to the small GTPase superfamily. Rho family.

It is found in the cell membrane. The sequence is that of Ras-like GTP-binding protein O-RHO from Diplobatis ommata (Ocellated electric ray).